The primary structure comprises 296 residues: MGIIKGVLFSIVLINLSLVVFCGYPRRPVDVPFWKNYEPSWASHHIKFLNGGTTTDLILDRSSGAGFQSKKSYLFGHFSMKMRLVGGDSAGVVTAFYLSSNNAEHDEIDFEFLGNRTGQPYILQTNVFTGGKGNREQRIYLWFDPTKGYHSYSVLWNTYLIVIFVDDVPIRAFKNSKDLGVKFPFNQPMKIYSSLWDADDWATRGGLEKTNWANAPFTASYTSFHVDGCEAATPQEVQVCNTKGMKWWDQKAFQDLDALQYRRLRWVRQKYTVYNYCTDKARYPVPPPECTKDRDI.

The first 22 residues, methionine 1–cysteine 22, serve as a signal peptide directing secretion. The GH16 domain occupies glycine 23–tyrosine 221. Residue glutamate 107 is the Nucleophile of the active site. Glutamate 111 (proton donor) is an active-site residue. A xyloglucan-binding site is contributed by glutamate 111. Asparagine 115 is a glycosylation site (N-linked (GlcNAc...) asparagine). Xyloglucan contacts are provided by residues glutamine 124–asparagine 126, asparagine 134–glutamate 136, aspartate 200–tryptophan 201, and glycine 205. 2 disulfides stabilise this stretch: cysteine 229–cysteine 240 and cysteine 277–cysteine 290. Position 282 (arginine 282) interacts with xyloglucan.

It belongs to the glycosyl hydrolase 16 family. XTH group 1 subfamily. Contains at least one intrachain disulfide bond essential for its enzymatic activity.

Its subcellular location is the secreted. The protein localises to the cell wall. The protein resides in the extracellular space. It is found in the apoplast. The enzyme catalyses breaks a beta-(1-&gt;4) bond in the backbone of a xyloglucan and transfers the xyloglucanyl segment on to O-4 of the non-reducing terminal glucose residue of an acceptor, which can be a xyloglucan or an oligosaccharide of xyloglucan.. Catalyzes xyloglucan endohydrolysis (XEH) and/or endotransglycosylation (XET). Cleaves and religates xyloglucan polymers, an essential constituent of the primary cell wall, and thereby participates in cell wall construction of growing tissues. The polypeptide is Probable xyloglucan endotransglucosylase/hydrolase 1 (XTH1) (Solanum lycopersicum (Tomato)).